Consider the following 597-residue polypeptide: MKNIRNFSIIAHIDHGKSTLSDRIIQLCGGLSDREMEAQVLDSMDLERERGITIKAQSVTLDYKAQDGQVYQLNFIDTPGHVDFSYEVSRSLAACEGALLVVDAGQGVEAQTLANCYTAIEMDLEVVPVLNKIDLPAADPDRVAQEIEDIVGIDATDAVRCSAKTGVGVGDVLERLVRDIPAPEGEPEAPLQALIIDSWFDNYLGVVSLIRIKNGTLRKGDKVKVMTTGQTYNADRLGIFTPKQVDRDVLNCGEVGWLVCAIKDIHGAPVGDTLTLARNPADVALPGFKKVKPQVYAGLFPVSSDDYDAFRDALGKLSLNDASLFYEPETSTALGFGFRCGFLGLLHMEIIQERLEREYDLDLITTAPTVVYEVETTRNEVIYVDSPSKLPAVNNIQELREPIAECHMLLPQEFLGNVITLCIEKRGVQTNMVYHGNQVALTYEIPMAEVVLDFFDRLKSTSRGYASLDYGFKRFQASDMVRVDVMVNSERVDALALITHRANANVRGRELVEKMKELIPRQQFDIAIQAAIGNQIIARSTVKQLRKNVLAKCYGGDVSRKKKLLQKQKEGKKRMKQIGNVELPQEAFLAILHVGKD.

The tr-type G domain maps to 2 to 184 (KNIRNFSIIA…RLVRDIPAPE (183 aa)). GTP is bound by residues 14-19 (DHGKST) and 131-134 (NKID).

This sequence belongs to the TRAFAC class translation factor GTPase superfamily. Classic translation factor GTPase family. LepA subfamily.

It localises to the cell inner membrane. The catalysed reaction is GTP + H2O = GDP + phosphate + H(+). In terms of biological role, required for accurate and efficient protein synthesis under certain stress conditions. May act as a fidelity factor of the translation reaction, by catalyzing a one-codon backward translocation of tRNAs on improperly translocated ribosomes. Back-translocation proceeds from a post-translocation (POST) complex to a pre-translocation (PRE) complex, thus giving elongation factor G a second chance to translocate the tRNAs correctly. Binds to ribosomes in a GTP-dependent manner. The sequence is that of Elongation factor 4 from Edwardsiella ictaluri (strain 93-146).